The following is a 250-amino-acid chain: tRNA (guanine-N(1)-)-methyltransferase (250 aa).

S-adenosyl-L-methionine-binding positions include G115 and 135–140 (LGDFVL).

The protein belongs to the RNA methyltransferase TrmD family. As to quaternary structure, homodimer.

It localises to the cytoplasm. The catalysed reaction is guanosine(37) in tRNA + S-adenosyl-L-methionine = N(1)-methylguanosine(37) in tRNA + S-adenosyl-L-homocysteine + H(+). In terms of biological role, specifically methylates guanosine-37 in various tRNAs. The chain is tRNA (guanine-N(1)-)-methyltransferase from Legionella pneumophila (strain Lens).